A 146-amino-acid polypeptide reads, in one-letter code: MSAYKTVVVGTDGSDSSMRAVDRAAQIAGADAKLIIASAYLPQHEDARAADILKDESYKVTGTAPIYEILHDAKERAHNAGAKNVEERPIVGAPVDALVNLADEEKADLLVVGNVGLSTIAGRLLGSVPANVSRRAKVDVLIVHTT.

The protein belongs to the universal stress protein A family.

The polypeptide is Universal stress protein MT1672 (Mycobacterium tuberculosis (strain CDC 1551 / Oshkosh)).